Reading from the N-terminus, the 462-residue chain is MASNSSSCPTPGGGHLNGYPVPPYAFFFPPMLGGLSPPGALTSLQHQLPVSGYSTPSPATIETQSSSSEEIVPSPPSPPPLPRIYKPCFVCQDKSSGYHYGVSACEGCKGFFRRSIQKNMVYTCHRDKNCIINKVTRNRCQYCRLQKCFDVGMSKESVRNDRNKKKKEAPKPECSESYTLTPEVGELIEKVRKAHQETFPALCQLGKYTTNNSSEQRVSLDIDLWDKFSELSTKCIIKTVEFAKQLPGFTTLTIADQITLLKAACLDILILRICTRYTPEQDTMTFSDGLTLNRTQMHNAGFGPLTDLVFAFANQLLPLEMDDAETGLLSAICLICGDRQDLEQPDKVDMLQEPLLEALKVYVRKRRPSRPHMFPKMLMKITDLRSISAKGAERVITLKMEIPGSMPPLIQEMLENSEGLDTLSGQSGGGTRDGGGLAPPPGSCSPSLSPSSHRSSPATQSP.

Positions 1–87 (MASNSSSCPT…PPPLPRIYKP (87 aa)) are modulating. Positions 52 to 64 (GYSTPSPATIETQ) are enriched in polar residues. The disordered stretch occupies residues 52 to 77 (GYSTPSPATIETQSSSSEEIVPSPPS). Position 77 is a phosphoserine; by CDK7 (serine 77). NR C4-type zinc fingers lie at residues 88 to 108 (CFVC…CEGC) and 124 to 148 (CHRD…LQKC). The nuclear receptor DNA-binding region spans 88–153 (CFVCQDKSSG…RLQKCFDVGM (66 aa)). Serine 96 is subject to Phosphoserine; by PKB/AKT1. The hinge stretch occupies residues 154-182 (SKESVRNDRNKKKKEAPKPECSESYTLTP). Glycyl lysine isopeptide (Lys-Gly) (interchain with G-Cter in SUMO) cross-links involve residues lysine 166 and lysine 171. The region spanning 183-417 (EVGELIEKVR…PLIQEMLENS (235 aa)) is the NR LBD domain. Position 219 is a phosphoserine; by PKA (serine 219). An all-trans-retinoate-binding site is contributed by cysteine 235. Positions 254–258 (IADQI) match the UBR5-degron motif. An all-trans-retinoate-binding site is contributed by serine 287. Lysine 347 bears the N6,N6,N6-trimethyllysine mark. Residue serine 369 is modified to Phosphoserine; by PKA and RPS6KA5. Lysine 399 is covalently cross-linked (Glycyl lysine isopeptide (Lys-Gly) (interchain with G-Cter in SUMO)). The segment at 404 to 419 (GSMPPLIQEMLENSEG) is required for binding corepressor NCOR1. Residues 408 to 416 (PLIQEMLEN) carry the 9aaTAD motif. Residues 420-462 (LDTLSGQSGGGTRDGGGLAPPPGSCSPSLSPSSHRSSPATQSP) are disordered. Residues 426–437 (QSGGGTRDGGGL) show a composition bias toward gly residues. The span at 444 to 462 (CSPSLSPSSHRSSPATQSP) shows a compositional bias: low complexity.

Belongs to the nuclear hormone receptor family. NR1 subfamily. Heterodimer; with RXRA. Binds DNA preferentially as a heterodimer. RXRA serves as enhancer to induce RARA binding to RARE. Interacts with RXRG. Interacts with NCOA3 and NCOA6 coactivators, leading to a strong increase of transcription of target genes. Interacts with NCOA7; the interaction requires ligand-binding. Interacts (via the ligand-binding domain) with PRAME; interaction is direct and ligand (retinoic acid)-dependent. Interacts with PRKAR1A; the interaction negatively regulates RARA transcriptional activity. Interacts with NCOR1; the interaction occurs in the absence of ligand and represses transcriptional activity. Interacts with NCOR2. Interacts with PRMT2. Interacts with LRIF1. Interacts with ASXL1 and NCOA1. Interacts with ACTN4. Interacts with CDK7; the interaction is enhanced by interaction with GTF2H3. Interacts with GTF2H3; the interaction requires prior phosphorylation on Ser-369 which then enhances interaction with CDK7. In a complex with HDAC3, HDAC5 and HDAC7; the HDACs serve as corepressors of RARA, causing its deacetylation and inhibition of RARE DNA element binding; association with HDAC3, HDAC5 and HDAC7 is increased upon oscillatory shear stress. In the absence of hormonal ligand, interacts with TACC1. Phosphorylated on serine and threonine residues. Phosphorylation does not change during cell cycle. Phosphorylation on Ser-77 is crucial for the N-terminal AF1 transcriptional activity. Under stress conditions, MAPK8 enhances phosphorylation on Thr-181, Ser-445 and Ser-461 leading to RARA ubiquitination and degradation. Phosphorylation by AKT1 inhibits the transactivation activity. On retinoic acid stimulation, phosphorylation on Ser-369 by RPS6KA5 promotes interaction with GTF2H3 and the CDK7-mediated phosphorylation of Ser-77. In terms of processing, ubiquitinated by UBR5, leading to its degradation: UBR5 specifically recognizes and binds ligand-bound RARA when it is not associated with coactivators (NCOAs). In presence of NCOAs, the UBR5-degron is not accessible, preventing its ubiquitination and degradation. Post-translationally, sumoylated with SUMO2, mainly on Lys-399 which is also required for SENP6 binding. On all-trans retinoic acid (ATRA) binding, a conformational change may occur that allows sumoylation on two additional site, Lys-166 and Lys-171. Probably desumoylated by SENP6. Sumoylation levels determine nuclear localization and regulate ATRA-mediated transcriptional activity. Acetylated; acetylation is increased upon pulsatile shear stress and decreased upon oscillatory shear stress. As to expression, expressed in Sertoli cells and germ cells.

It is found in the nucleus. The protein localises to the cytoplasm. Receptor for retinoic acid. Retinoic acid receptors bind as heterodimers to their target response elements in response to their ligands, all-trans or 9-cis retinoic acid, and regulate gene expression in various biological processes. The RXR/RAR heterodimers bind to the retinoic acid response elements (RARE) composed of tandem 5'-AGGTCA-3' sites known as DR1-DR5. In the absence of ligand, the RXR-RAR heterodimers associate with a multiprotein complex containing transcription corepressors that induce histone deacetylation, chromatin condensation and transcriptional suppression. On ligand binding, the corepressors dissociate from the receptors and associate with the coactivators leading to transcriptional activation. Formation of heterocomplex with histone deacetylases might lead to inhibition of RARE DNA element binding and to transcriptional repression. Transcriptional activation and RARE DNA element binding might be supported by the transcription factor KLF2. RARA plays an essential role in the regulation of retinoic acid-induced germ cell development during spermatogenesis. Has a role in the survival of early spermatocytes at the beginning prophase of meiosis. In Sertoli cells, may promote the survival and development of early meiotic prophase spermatocytes. In concert with RARG, required for skeletal growth, matrix homeostasis and growth plate function. Together with RXRA, positively regulates microRNA-10a expression, thereby inhibiting the GATA6/VCAM1 signaling response to pulsatile shear stress in vascular endothelial cells. In association with HDAC3, HDAC5 and HDAC7 corepressors, plays a role in the repression of microRNA-10a and thereby promotes the inflammatory response. This is Retinoic acid receptor alpha (Rara) from Mus musculus (Mouse).